A 510-amino-acid chain; its full sequence is uncharacterized protein (510 aa).

This sequence belongs to the phage portal family. PBSX subfamily.

This is an uncharacterized protein from Bacillus subtilis (strain 168).